The sequence spans 172 residues: Putative acetyltransferase YvoF (172 aa).

Belongs to the transferase hexapeptide repeat family.

The sequence is that of Putative acetyltransferase YvoF (yvoF) from Bacillus subtilis (strain 168).